Reading from the N-terminus, the 157-residue chain is Crossover junction endodeoxyribonuclease RuvC (157 aa).

Residues aspartate 7, glutamate 67, and aspartate 140 contribute to the active site. Positions 7, 67, and 140 each coordinate Mg(2+).

Belongs to the RuvC family. Homodimer which binds Holliday junction (HJ) DNA. The HJ becomes 2-fold symmetrical on binding to RuvC with unstacked arms; it has a different conformation from HJ DNA in complex with RuvA. In the full resolvosome a probable DNA-RuvA(4)-RuvB(12)-RuvC(2) complex forms which resolves the HJ. It depends on Mg(2+) as a cofactor.

Its subcellular location is the cytoplasm. It carries out the reaction Endonucleolytic cleavage at a junction such as a reciprocal single-stranded crossover between two homologous DNA duplexes (Holliday junction).. Its function is as follows. The RuvA-RuvB-RuvC complex processes Holliday junction (HJ) DNA during genetic recombination and DNA repair. Endonuclease that resolves HJ intermediates. Cleaves cruciform DNA by making single-stranded nicks across the HJ at symmetrical positions within the homologous arms, yielding a 5'-phosphate and a 3'-hydroxyl group; requires a central core of homology in the junction. The consensus cleavage sequence is 5'-(A/T)TT(C/G)-3'. Cleavage occurs on the 3'-side of the TT dinucleotide at the point of strand exchange. HJ branch migration catalyzed by RuvA-RuvB allows RuvC to scan DNA until it finds its consensus sequence, where it cleaves and resolves the cruciform DNA. This chain is Crossover junction endodeoxyribonuclease RuvC, found in Thermosipho melanesiensis (strain DSM 12029 / CIP 104789 / BI429).